A 340-amino-acid polypeptide reads, in one-letter code: Replication factor C subunit 2 (340 aa).

59–66 (GSPGTGKT) is a binding site for ATP.

It belongs to the activator 1 small subunits family. As to quaternary structure, heteropentamer of subunits rfc1, rfc2, rfc3, rfc4 and rfc5 that forms a complex (RFC) with PCNA in the presence of ATP. Two other complexes exist where rfc1 can be replaced by either ctf18 or elg1 to form the ctf18-RFC or the elg1-RFC complexes respectively.

The protein resides in the nucleus. The elongation of primed DNA templates by DNA polymerase delta and epsilon requires the action of the accessory proteins PCNA and activator 1. Subunit 2 binds ATP and single-stranded DNA. The chain is Replication factor C subunit 2 (rfc2) from Schizosaccharomyces pombe (strain 972 / ATCC 24843) (Fission yeast).